The following is an 86-amino-acid chain: MNLQTLLSMISNTSSWSISTAIIMVICNLLCIGLGRYAIQVRGLGPSIPALGLKGFGLPELLATTSLGHIIGAGAIIGLNSIKIIN.

Helical transmembrane passes span 15-35 and 57-77; these read SWSI…IGLG and GLPE…GAII.

This sequence belongs to the PsaG/PsaK family.

It localises to the plastid. Its subcellular location is the chloroplast thylakoid membrane. The sequence is that of Photosystem I reaction center subunit PsaK from Gracilaria tenuistipitata var. liui (Red alga).